The sequence spans 968 residues: RNA polymerase-associated protein RapA (968 aa).

The region spanning 164–334 is the Helicase ATP-binding domain; it reads DVGRRHAPRV…FARLRLLDPN (171 aa). 177-184 lines the ATP pocket; it reads DEVGLGKT. The short motif at 280 to 283 is the DEAH box element; sequence DEAH. The Helicase C-terminal domain occupies 490-662; the sequence is RVEWLMGYLT…YLASPDQTEG (173 aa).

Belongs to the SNF2/RAD54 helicase family. RapA subfamily. As to quaternary structure, interacts with the RNAP. Has a higher affinity for the core RNAP than for the holoenzyme. Its ATPase activity is stimulated by binding to RNAP.

Functionally, transcription regulator that activates transcription by stimulating RNA polymerase (RNAP) recycling in case of stress conditions such as supercoiled DNA or high salt concentrations. Probably acts by releasing the RNAP, when it is trapped or immobilized on tightly supercoiled DNA. Does not activate transcription on linear DNA. Probably not involved in DNA repair. The protein is RNA polymerase-associated protein RapA of Escherichia coli O139:H28 (strain E24377A / ETEC).